A 508-amino-acid polypeptide reads, in one-letter code: Heat shock 70 kDa protein 14 (508 aa).

It belongs to the heat shock protein 70 family. In terms of assembly, component of ribosome-associated complex (RAC).

The protein localises to the cytoplasm. Its subcellular location is the cytosol. Component of the ribosome-associated complex (RAC), a complex involved in folding or maintaining nascent polypeptides in a folding-competent state. This is Heat shock 70 kDa protein 14 (hspa14) from Xenopus tropicalis (Western clawed frog).